A 465-amino-acid polypeptide reads, in one-letter code: Poly(A) polymerase I (465 aa).

Active-site residues include aspartate 80, aspartate 82, and aspartate 162. Residues 430-465 form a disordered region; it reads APPEQKGMLNELDDDPAPRRRRSRPRKRAPRREGTV. Residues 448–459 show a composition bias toward basic residues; it reads RRRRSRPRKRAP.

It belongs to the tRNA nucleotidyltransferase/poly(A) polymerase family.

It carries out the reaction RNA(n) + ATP = RNA(n)-3'-adenine ribonucleotide + diphosphate. Functionally, adds poly(A) tail to the 3' end of many RNAs, which usually targets these RNAs for decay. Plays a significant role in the global control of gene expression, through influencing the rate of transcript degradation, and in the general RNA quality control. The polypeptide is Poly(A) polymerase I (Salmonella typhimurium (strain LT2 / SGSC1412 / ATCC 700720)).